The primary structure comprises 378 residues: Putative monoglyceride lipase (378 aa).

Positions 97–101 (GHSMG) match the GXSXG motif. Catalysis depends on serine 99, which acts as the Nucleophile. Catalysis depends on charge relay system residues aspartate 219 and histidine 249. Positions 276-292 (PSETVKSEQETAVEHPK) are enriched in basic and acidic residues. A disordered region spans residues 276–350 (PSETVKSEQE…TSESTTVPET (75 aa)). Low complexity predominate over residues 293–305 (PTATTSAPSASPT). Serine 301 is modified (phosphoserine). Polar residues predominate over residues 341–350 (TSESTTVPET).

It belongs to the AB hydrolase superfamily. Monoacylglycerol lipase family.

The protein resides in the lipid droplet. Its subcellular location is the cytoplasm. It is found in the endoplasmic reticulum. It localises to the mitochondrion outer membrane. It carries out the reaction Hydrolyzes glycerol monoesters of long-chain fatty acids.. It participates in glycerolipid metabolism; triacylglycerol degradation. In terms of biological role, converts monoacylglycerides (MAG) to free fatty acids and glycerol. Has a strong preference for monounsaturated monoglycerides. Required for efficient degradation of MAG, short-lived intermediates of glycerolipid metabolism which may also function as lipid signaling molecules. Controls inactivation of the signaling lipid N-palmitoylethanolamine (PEA). Involved in fatty acid ethyl ester (FAEE) catabolism. FAEEs are non-oxidative metabolites of ethanol that are transiently incorporated into lipid droplets (LDs). Their mobilization by LD-resident FAEE hydrolases facilitates a controlled metabolism of these potentially toxic lipid metabolites. The polypeptide is Putative monoglyceride lipase (mgl1) (Schizosaccharomyces pombe (strain 972 / ATCC 24843) (Fission yeast)).